We begin with the raw amino-acid sequence, 115 residues long: Holo-[acyl-carrier-protein] synthase (115 aa).

The Mg(2+) site is built by Asp6 and Glu51.

It belongs to the P-Pant transferase superfamily. AcpS family. Mg(2+) serves as cofactor.

Its subcellular location is the cytoplasm. It carries out the reaction apo-[ACP] + CoA = holo-[ACP] + adenosine 3',5'-bisphosphate + H(+). In terms of biological role, transfers the 4'-phosphopantetheine moiety from coenzyme A to a Ser of acyl-carrier-protein. The sequence is that of Holo-[acyl-carrier-protein] synthase from Campylobacter jejuni subsp. jejuni serotype O:23/36 (strain 81-176).